Consider the following 265-residue polypeptide: Energy-coupling factor transporter ATP-binding protein EcfA1 (265 aa).

Positions 2–236 (IKIKNLVFRY…KEIVELAKID (235 aa)) constitute an ABC transporter domain. 36-43 (GHNGSGKS) contacts ATP.

The protein belongs to the ABC transporter superfamily. Energy-coupling factor EcfA family. In terms of assembly, forms a stable energy-coupling factor (ECF) transporter complex composed of 2 membrane-embedded substrate-binding proteins (S component), 2 ATP-binding proteins (A component) and 2 transmembrane proteins (T component).

It localises to the cell membrane. ATP-binding (A) component of a common energy-coupling factor (ECF) ABC-transporter complex. Unlike classic ABC transporters this ECF transporter provides the energy necessary to transport a number of different substrates. This Mycoplasmopsis pulmonis (strain UAB CTIP) (Mycoplasma pulmonis) protein is Energy-coupling factor transporter ATP-binding protein EcfA1.